The primary structure comprises 200 residues: Recombination protein RecR (200 aa).

The C4-type zinc finger occupies 57 to 72 (CRQCRTLTEDDLCPQC). The region spanning 80–175 (TLLCVVEGPM…IASRIAHGVP (96 aa)) is the Toprim domain.

It belongs to the RecR family.

Functionally, may play a role in DNA repair. It seems to be involved in an RecBC-independent recombinational process of DNA repair. It may act with RecF and RecO. The sequence is that of Recombination protein RecR from Pseudomonas fluorescens (strain Pf0-1).